A 278-amino-acid polypeptide reads, in one-letter code: Para-Rep C1 (278 aa).

In terms of domain architecture, CRESS-DNA virus Rep endonuclease spans 1 to 95 (MACSNWVFTR…VAGPWSYGDL (95 aa)). The RCR-1 signature appears at 8–11 (FTRN). Positions 33 and 39 each coordinate a divalent metal cation. Residues 39 to 41 (HIQ) carry the RCR-2 motif. A Nuclear localization signal motif is present at residues 48 to 69 (KKARFSTVKEIIGGNPHVEKMK). Residue Tyr78 is the For DNA cleavage activity of the active site. The RCR-3 motif lies at 78 to 81 (YVQK). Glu83 provides a ligand contact to a divalent metal cation. The Nuclear localization signal signature appears at 95–101 (LLKRGSH). An ATP-binding site is contributed by 176-178 (GKS).

Belongs to the nanoviridea/circoviridae replication-associated protein family. As to quaternary structure, homooligomer (Potential). Rep binds to repeated DNA motifs (iterons). The cofactor is Mg(2+). Requires Mn(2+) as cofactor.

Its subcellular location is the host nucleus. The catalysed reaction is ATP + H2O = ADP + phosphate + H(+). Initiates and terminates the replication only of its own subviral DNA molecule. The closed circular ssDNA genome is first converted to a superhelical dsDNA. Rep binds a specific hairpin at the genome origin of replication. Introduces an endonucleolytic nick within the intergenic region of the genome, thereby initiating the rolling circle replication (RCR). Following cleavage, binds covalently to the 5'-phosphate of DNA as a tyrosyl ester. The cleavage gives rise to a free 3'-OH that serves as a primer for the cellular DNA polymerase. The polymerase synthesizes the (+) strand DNA by rolling circle mechanism. After one round of replication, a Rep-catalyzed nucleotidyl transfer reaction releases a circular single-stranded virus genome, thereby terminating the replication. Displays origin-specific DNA cleavage, nucleotidyl transferase, ATPase and helicase activities. This chain is Para-Rep C1 (C1), found in Faba bean necrotic yellows C1 alphasatellite (FBNYC1A).